The primary structure comprises 220 residues: Antistasin (220 aa).

A signal peptide spans 1-19; sequence MNYLFVFLALSAAVTFANA. 6 Antistasin-like domains span residues 21–46, 54–79, 91–117, 120–145, 154–180, and 183–208; these read CNKI…ICKC, CSNR…ICRC, CDGL…KCEC, CKQF…TCKC, CDDL…KCEC, and CKNF…TCKC.

This sequence belongs to the protease inhibitor I15 (antistasin) family. Gland cells. It is more strongly expressed in the head than in the gastric tissue.

Its subcellular location is the secreted. Functionally, this highly disulfide-bonded protein is a potent inhibitor of factor Xa. Facilitates digestion of tissues and may also protect the gastric tissues from its own digestive enzymes. May have therapeutic utility as an anticoagulant. Also exhibits a strong metastatic activity. The chain is Antistasin from Hydra vulgaris (Hydra).